A 97-amino-acid polypeptide reads, in one-letter code: TKVDLTVEKGSDAKTLVLNIKYTRPGDTLAEVELRQHGSEEWEPMTKKGNLWEVKSAKPLTGPMNFRFLSKGGMKNVFDEVIPTAFTVGKTYTPEYN.

The region spanning 14–94 (KTLVLNIKYT…AFTVGKTYTP (81 aa)) is the Expansin-like CBD domain.

It belongs to the expansin family. Expansin B subfamily.

It is found in the secreted. In Lolium perenne (Perennial ryegrass), this protein is Pollen allergen Lol p 3.